A 158-amino-acid chain; its full sequence is Transcription elongation factor GreA (158 aa).

Residues 53–73 are a coiled coil; the sequence is EQQGMVEARIRDIEAKLSNAQ.

The protein belongs to the GreA/GreB family.

Its function is as follows. Necessary for efficient RNA polymerase transcription elongation past template-encoded arresting sites. The arresting sites in DNA have the property of trapping a certain fraction of elongating RNA polymerases that pass through, resulting in locked ternary complexes. Cleavage of the nascent transcript by cleavage factors such as GreA or GreB allows the resumption of elongation from the new 3'terminus. GreA releases sequences of 2 to 3 nucleotides. This is Transcription elongation factor GreA from Pseudomonas aeruginosa (strain ATCC 15692 / DSM 22644 / CIP 104116 / JCM 14847 / LMG 12228 / 1C / PRS 101 / PAO1).